Consider the following 354-residue polypeptide: Annexin A13 (354 aa).

Annexin repeat units follow at residues 26–97, 98–177, 203–275, and 279–350; these read NDPN…MLLT, DTDK…ALLQ, NLVE…LTLN, and NRPK…ALIG. Ca(2+) is bound by residues Met39, Gly41, Gly43, Thr44, Glu46, Glu83, Met111, Gly113, Gly115, Glu118, Asp163, Asp265, Met292, Gly294, Leu295, Gly296, and Glu336.

This sequence belongs to the annexin family. Homodimer.

The protein localises to the tegument. Its subcellular location is the secreted. It is found in the extracellular exosome. The protein resides in the host cell. Functionally, involved in reproduction of the worm. Involved in host-parasite interaction. Delivered into the host cell by means of parasite exosomes. Binds to acidic phospholipid membranes in a calcium-dependent manner in vitro. Causes aggregation of liposomes in the presence of calcium, but not in its absence. Likely to promote membrane fusion. May provide structural integrity within the tegument. This Schistosoma japonicum (Blood fluke) protein is Annexin A13.